A 270-amino-acid chain; its full sequence is MSDLHNESIFITGGGSGLGLALVERFIEEGAQVATLELSAAKVASLRQRFGEHILAVEGNVTCYADYQRAVDQILTRSGKLDCFIGNAGIWDHNASLVNTPAETLETGFHELFNVNVLGYLLGAKACAPALISSEGSMIFTLSNAAWYPGGGGPLYTASKHAATGLIRQLAYELAPKVRVNGVGPCGMASDLRGPQALGQSETSIMQSLTPEKIAAILPLQFFPQPADFTGPYVMLASRRNNRALSGVMINADAGLAIRGIRHVAAGLDL.

Residue 10–34 (FITGGGSGLGLALVERFIEEGAQVA) participates in NAD(+) binding. Ser-143 lines the substrate pocket. The active-site Proton acceptor is the Tyr-156.

It belongs to the short-chain dehydrogenases/reductases (SDR) family.

It catalyses the reaction 3-(cis-5,6-dihydroxycyclohexa-1,3-dien-1-yl)propanoate + NAD(+) = 3-(2,3-dihydroxyphenyl)propanoate + NADH + H(+). The catalysed reaction is (2E)-3-(cis-5,6-dihydroxycyclohexa-1,3-dien-1-yl)prop-2-enoate + NAD(+) = (2E)-3-(2,3-dihydroxyphenyl)prop-2-enoate + NADH + H(+). It functions in the pathway aromatic compound metabolism; 3-phenylpropanoate degradation. Functionally, converts 3-phenylpropionate-dihydrodiol (PP-dihydrodiol) and cinnamic acid-dihydrodiol (CI-dihydrodiol) into 3-(2,3-dihydroxylphenyl)propanoic acid (DHPP) and 2,3-dihydroxicinnamic acid (DHCI), respectively. The polypeptide is 3-phenylpropionate-dihydrodiol/cinnamic acid-dihydrodiol dehydrogenase (Escherichia coli O8 (strain IAI1)).